The primary structure comprises 357 residues: UDP-N-acetylglucosamine--N-acetylmuramyl-(pentapeptide) pyrophosphoryl-undecaprenol N-acetylglucosamine transferase (357 aa).

Residues 14–16 (TGG), asparagine 120, arginine 164, serine 194, and glutamine 291 contribute to the UDP-N-acetyl-alpha-D-glucosamine site.

This sequence belongs to the glycosyltransferase 28 family. MurG subfamily.

It localises to the cell inner membrane. It catalyses the reaction di-trans,octa-cis-undecaprenyl diphospho-N-acetyl-alpha-D-muramoyl-L-alanyl-D-glutamyl-meso-2,6-diaminopimeloyl-D-alanyl-D-alanine + UDP-N-acetyl-alpha-D-glucosamine = di-trans,octa-cis-undecaprenyl diphospho-[N-acetyl-alpha-D-glucosaminyl-(1-&gt;4)]-N-acetyl-alpha-D-muramoyl-L-alanyl-D-glutamyl-meso-2,6-diaminopimeloyl-D-alanyl-D-alanine + UDP + H(+). The protein operates within cell wall biogenesis; peptidoglycan biosynthesis. Its function is as follows. Cell wall formation. Catalyzes the transfer of a GlcNAc subunit on undecaprenyl-pyrophosphoryl-MurNAc-pentapeptide (lipid intermediate I) to form undecaprenyl-pyrophosphoryl-MurNAc-(pentapeptide)GlcNAc (lipid intermediate II). This is UDP-N-acetylglucosamine--N-acetylmuramyl-(pentapeptide) pyrophosphoryl-undecaprenol N-acetylglucosamine transferase from Fusobacterium nucleatum subsp. nucleatum (strain ATCC 25586 / DSM 15643 / BCRC 10681 / CIP 101130 / JCM 8532 / KCTC 2640 / LMG 13131 / VPI 4355).